The sequence spans 62 residues: MKASELKNKSMEELTAKAAELSQELFNLRFQLHTGRLENTAKISSVKKDIARIKTILSEKRG.

The protein belongs to the universal ribosomal protein uL29 family.

The protein is Large ribosomal subunit protein uL29 of Geobacter sulfurreducens (strain ATCC 51573 / DSM 12127 / PCA).